The chain runs to 608 residues: ATP-binding protein Uup (608 aa).

ABC transporter domains lie at A7–A217 and V285–V512. ATP is bound by residues G42–S49 and G317–T324. Positions A522–G608 are C-terminal domain (CTD), binds DNA.

Belongs to the ABC transporter superfamily. ABCF family. Uup subfamily.

The protein localises to the cytoplasm. It catalyses the reaction ATP + H2O = ADP + phosphate + H(+). Its function is as follows. Probably plays a role in ribosome assembly or function. May be involved in resolution of branched DNA intermediates that result from template switching in postreplication gaps. Binds DNA and has ATPase activity. In terms of biological role, one of a cluster of genes involved in attachment of the holdfast to the cell. The holdfast is a structure that allows the bacteria to firmly adhere to surfaces. The polypeptide is ATP-binding protein Uup (Caulobacter vibrioides (strain ATCC 19089 / CIP 103742 / CB 15) (Caulobacter crescentus)).